Consider the following 659-residue polypeptide: Putative RING finger protein R311 (659 aa).

An RING-type zinc finger spans residues Cys502–Met540.

In Acanthamoeba polyphaga (Amoeba), this protein is Putative RING finger protein R311.